The sequence spans 374 residues: GDSL esterase/lipase 1 (374 aa).

An N-terminal signal peptide occupies residues 1 to 25 (MENSQLVSITFLAYTIIISIGSINC). The N-linked (GlcNAc...) asparagine glycan is linked to Asn-34. Residue Ser-44 is the Nucleophile of the active site. N-linked (GlcNAc...) asparagine glycosylation is found at Asn-184, Asn-203, and Asn-330. Residues Asp-338 and His-341 each act as charge relay system in the active site. The N-linked (GlcNAc...) asparagine glycan is linked to Asn-360.

Belongs to the 'GDSL' lipolytic enzyme family.

The protein localises to the secreted. Functionally, confers resistance to the necrotrophic fungus Alternaria brassicicola. Possesses lipase and antimicrobial activities that directly disrupt fungal spore integrity. Triggers systemic resistance, mostly by the ethylene-dependent pathway. The sequence is that of GDSL esterase/lipase 1 from Arabidopsis thaliana (Mouse-ear cress).